Here is a 207-residue protein sequence, read N- to C-terminus: Alpha-1-acid glycoprotein 8 (207 aa).

Residues 1–18 (MALHTVLIMLSLLPMLEA) form the signal peptide. N25, N34, N76, N94, and N104 each carry an N-linked (GlcNAc...) asparagine glycan. A disulfide bridge connects residues C91 and C184.

Belongs to the calycin superfamily. Lipocalin family. As to expression, expressed by the liver and secreted in plasma.

The protein localises to the secreted. In terms of biological role, functions as a transport protein in the blood stream. Binds various ligands in the interior of its beta-barrel domain. Appears to function in modulating the activity of the immune system during the acute-phase reaction. The polypeptide is Alpha-1-acid glycoprotein 8 (Orm8) (Mus caroli (Ryukyu mouse)).